The primary structure comprises 226 residues: ATP synthase F(0) complex subunit a (226 aa).

A run of 6 helical transmembrane segments spans residues 11 to 31 (APTILGQPATIPIIMFPTLLI), 68 to 88 (WSLMLMSLITFITMTNLLGLL), 97 to 117 (QLSMNLAMAIPLWAGTIITGL), 138 to 158 (IPMLVMIETISLLIQPMALAV), 164 to 184 (ITAGHLLMHLIGNTMLTLSTI), and 194 to 214 (VLLMLLTILEIAVALIQAYVF).

It belongs to the ATPase A chain family. Component of the ATP synthase complex composed at least of ATP5F1A/subunit alpha, ATP5F1B/subunit beta, ATP5MC1/subunit c (homooctomer), MT-ATP6/subunit a, MT-ATP8/subunit 8, ATP5ME/subunit e, ATP5MF/subunit f, ATP5MG/subunit g, ATP5MK/subunit k, ATP5MJ/subunit j, ATP5F1C/subunit gamma, ATP5F1D/subunit delta, ATP5F1E/subunit epsilon, ATP5PF/subunit F6, ATP5PB/subunit b, ATP5PD/subunit d, ATP5PO/subunit OSCP. ATP synthase complex consists of a soluble F(1) head domain (subunits alpha(3) and beta(3)) - the catalytic core - and a membrane F(0) domain - the membrane proton channel (subunits c, a, 8, e, f, g, k and j). These two domains are linked by a central stalk (subunits gamma, delta, and epsilon) rotating inside the F1 region and a stationary peripheral stalk (subunits F6, b, d, and OSCP). Interacts with DNAJC30; interaction is direct.

Its subcellular location is the mitochondrion inner membrane. It catalyses the reaction H(+)(in) = H(+)(out). Functionally, subunit a, of the mitochondrial membrane ATP synthase complex (F(1)F(0) ATP synthase or Complex V) that produces ATP from ADP in the presence of a proton gradient across the membrane which is generated by electron transport complexes of the respiratory chain. ATP synthase complex consist of a soluble F(1) head domain - the catalytic core - and a membrane F(1) domain - the membrane proton channel. These two domains are linked by a central stalk rotating inside the F(1) region and a stationary peripheral stalk. During catalysis, ATP synthesis in the catalytic domain of F(1) is coupled via a rotary mechanism of the central stalk subunits to proton translocation. With the subunit c (ATP5MC1), forms the proton-conducting channel in the F(0) domain, that contains two crucial half-channels (inlet and outlet) that facilitate proton movement from the mitochondrial intermembrane space (IMS) into the matrix. Protons are taken up via the inlet half-channel and released through the outlet half-channel, following a Grotthuss mechanism. The protein is ATP synthase F(0) complex subunit a of Papio hamadryas (Hamadryas baboon).